We begin with the raw amino-acid sequence, 404 residues long: Probable tRNA sulfurtransferase (404 aa).

The 106-residue stretch at 60 to 165 (EPVAEALKNV…DEAAYISHEE (106 aa)) folds into the THUMP domain. Residues 183–184 (ML), 208–209 (HF), arginine 265, glycine 287, and glutamine 296 each bind ATP.

Belongs to the ThiI family.

The protein localises to the cytoplasm. The catalysed reaction is [ThiI sulfur-carrier protein]-S-sulfanyl-L-cysteine + a uridine in tRNA + 2 reduced [2Fe-2S]-[ferredoxin] + ATP + H(+) = [ThiI sulfur-carrier protein]-L-cysteine + a 4-thiouridine in tRNA + 2 oxidized [2Fe-2S]-[ferredoxin] + AMP + diphosphate. It catalyses the reaction [ThiS sulfur-carrier protein]-C-terminal Gly-Gly-AMP + S-sulfanyl-L-cysteinyl-[cysteine desulfurase] + AH2 = [ThiS sulfur-carrier protein]-C-terminal-Gly-aminoethanethioate + L-cysteinyl-[cysteine desulfurase] + A + AMP + 2 H(+). The protein operates within cofactor biosynthesis; thiamine diphosphate biosynthesis. In terms of biological role, catalyzes the ATP-dependent transfer of a sulfur to tRNA to produce 4-thiouridine in position 8 of tRNAs, which functions as a near-UV photosensor. Also catalyzes the transfer of sulfur to the sulfur carrier protein ThiS, forming ThiS-thiocarboxylate. This is a step in the synthesis of thiazole, in the thiamine biosynthesis pathway. The sulfur is donated as persulfide by IscS. The polypeptide is Probable tRNA sulfurtransferase (Streptococcus uberis (strain ATCC BAA-854 / 0140J)).